We begin with the raw amino-acid sequence, 78 residues long: Large ribosomal subunit protein bL28 (78 aa).

Belongs to the bacterial ribosomal protein bL28 family.

The protein is Large ribosomal subunit protein bL28 of Aromatoleum aromaticum (strain DSM 19018 / LMG 30748 / EbN1) (Azoarcus sp. (strain EbN1)).